The primary structure comprises 165 residues: ATP synthase subunit b (165 aa).

Residues 7-27 (STTIGDIIIVSGSVLLLFILI) traverse the membrane as a helical segment.

This sequence belongs to the ATPase B chain family. In terms of assembly, F-type ATPases have 2 components, F(1) - the catalytic core - and F(0) - the membrane proton channel. F(1) has five subunits: alpha(3), beta(3), gamma(1), delta(1), epsilon(1). F(0) has three main subunits: a(1), b(2) and c(10-14). The alpha and beta chains form an alternating ring which encloses part of the gamma chain. F(1) is attached to F(0) by a central stalk formed by the gamma and epsilon chains, while a peripheral stalk is formed by the delta and b chains.

The protein resides in the cell membrane. F(1)F(0) ATP synthase produces ATP from ADP in the presence of a proton or sodium gradient. F-type ATPases consist of two structural domains, F(1) containing the extramembraneous catalytic core and F(0) containing the membrane proton channel, linked together by a central stalk and a peripheral stalk. During catalysis, ATP synthesis in the catalytic domain of F(1) is coupled via a rotary mechanism of the central stalk subunits to proton translocation. Its function is as follows. Component of the F(0) channel, it forms part of the peripheral stalk, linking F(1) to F(0). The chain is ATP synthase subunit b from Streptococcus agalactiae serotype Ia (strain ATCC 27591 / A909 / CDC SS700).